Here is a 552-residue protein sequence, read N- to C-terminus: Metal transporter Nramp6.1 (552 aa).

N11 carries an N-linked (GlcNAc...) asparagine glycan. A run of 7 helical transmembrane segments spans residues 55 to 75 (FLSY…PGNL), 88 to 108 (ELLW…SLAA), 133 to 155 (CLWL…GTAF), 159 to 181 (ILFN…LLLG), 189 to 209 (KLEL…FGEM), 238 to 258 (IALL…ALVL), and 275 to 295 (YFLI…LAVI). A glycan (N-linked (GlcNAc...) asparagine) is linked at N306. A run of 5 helical transmembrane segments spans residues 338 to 358 (IYAI…TYAG), 377 to 397 (LVTR…GGSS), 402 to 422 (LIII…IPLL), 438 to 458 (IYII…NIYY), and 478 to 498 (VFIG…VIYL). The tract at residues 511–552 (PNKNDPQQQTNMENGLAKSTEGPEMVDRAPYREDLADIPLPE) is disordered. The span at 514-523 (NDPQQQTNME) shows a compositional bias: polar residues. Residues 535 to 545 (MVDRAPYREDL) are compositionally biased toward basic and acidic residues.

Belongs to the NRAMP (TC 2.A.55) family.

The protein localises to the membrane. Probable divalent metal transporter. This chain is Metal transporter Nramp6.1, found in Populus trichocarpa (Western balsam poplar).